The sequence spans 490 residues: Cardiolipin synthase A (490 aa).

2 helical membrane passes run 20 to 40 and 49 to 69; these read LGLLLVGIQVLGFVAAIHAVL and IAWATSLVFMPYLTLLPYLVF. PLD phosphodiesterase domains follow at residues 229–256 and 403–430; these read VNFRNHRKVVVVDGECGFVGGHNVGVEY and QPGFLHQKVVLVDRDTAAVGSANLDNRS. Residues histidine 234, lysine 236, aspartate 241, histidine 408, lysine 410, and aspartate 415 contribute to the active site.

It belongs to the phospholipase D family. Cardiolipin synthase subfamily. ClsA sub-subfamily.

It localises to the cell inner membrane. The enzyme catalyses 2 a 1,2-diacyl-sn-glycero-3-phospho-(1'-sn-glycerol) = a cardiolipin + glycerol. Functionally, catalyzes the reversible phosphatidyl group transfer from one phosphatidylglycerol molecule to another to form cardiolipin (CL) (diphosphatidylglycerol) and glycerol. The chain is Cardiolipin synthase A from Pseudomonas aeruginosa (strain LESB58).